The primary structure comprises 231 residues: Ion-translocating oxidoreductase complex subunit E (231 aa).

Helical transmembrane passes span 18–38, 39–59, 69–89, 93–113, 127–147, 157–177, and 182–202; these read GLVQ…ITNA, LGLG…VSLV, IPVF…LINA, NLYL…VIIG, SAFD…VLGA, LFGG…IHVW, and PFLL…LIAL.

The protein belongs to the NqrDE/RnfAE family. The complex is composed of six subunits: RnfA, RnfB, RnfC, RnfD, RnfE and RnfG.

Its subcellular location is the cell inner membrane. In terms of biological role, part of a membrane-bound complex that couples electron transfer with translocation of ions across the membrane. The protein is Ion-translocating oxidoreductase complex subunit E of Shewanella frigidimarina (strain NCIMB 400).